Here is a 266-residue protein sequence, read N- to C-terminus: Gap junction beta-4 protein (266 aa).

The stretch at 2–13 (NWGFLQGILSGV) is an intramembrane region. Over 14–20 (NKYSTAL) the chain is Cytoplasmic. Residues 21 to 40 (GRIWLSVVFIFRVLVYVVAA) form a helical membrane-spanning segment. The Extracellular portion of the chain corresponds to 41 to 73 (EEVWDDDQKDFICNTKQPGCPNVCYDEFFPVSH). 3 cysteine pairs are disulfide-bonded: Cys-53–Cys-175, Cys-60–Cys-169, and Cys-64–Cys-164. The helical transmembrane segment at 74–94 (VRLWALQLILVTCPSLLVVMH) threads the bilayer. The Cytoplasmic segment spans residues 95-130 (VAYREERERKHRLKHGPNAPALYSNLSKKRGGLWWT). Residues 131-151 (YLLSLIFKAAVDSGFLYIFHC) traverse the membrane as a helical segment. The Extracellular segment spans residues 152–184 (IYKDYDMPRVVACSVTPCPHTVDCYIARPTEKK). A helical membrane pass occupies residues 185–205 (VFTYFMVVTAAICILLNLSEV). The Cytoplasmic portion of the chain corresponds to 206-266 (VYLVGKRCME…MATVDAGVYP (61 aa)).

It belongs to the connexin family. Beta-type (group I) subfamily. In terms of assembly, a hemichannel or connexon is composed of a hexamer of connexins. A functional gap junction is formed by the apposition of two hemichannels. Forms heteromeric channels with GJB2. As to expression, detected in cochlea (at protein level). Detected in cochlea. Expressed in skin.

It is found in the cell membrane. The protein resides in the cell junction. The protein localises to the gap junction. Functionally, structural component of gap junctions. Gap junctions are dodecameric channels that connect the cytoplasm of adjoining cells. They are formed by the docking of two hexameric hemichannels, one from each cell membrane. Small molecules and ions diffuse from one cell to a neighboring cell via the central pore. This Mus musculus (Mouse) protein is Gap junction beta-4 protein (Gjb4).